A 919-amino-acid chain; its full sequence is Alpha-amylase (919 aa).

An N-terminal signal peptide occupies residues methionine 1–alanine 33. Residues asparagine 182 and aspartate 281 each contribute to the Ca(2+) site. Aspartate 312 serves as the catalytic Nucleophile. Residue histidine 316 coordinates Ca(2+). Catalysis depends on glutamate 346, which acts as the Proton donor. Residues alanine 704–arginine 729 form a disordered region. Basic residues predominate over residues arginine 707–proline 724.

The protein belongs to the glycosyl hydrolase 13 family. As to quaternary structure, monomer. Ca(2+) serves as cofactor.

The protein resides in the secreted. It catalyses the reaction Endohydrolysis of (1-&gt;4)-alpha-D-glucosidic linkages in polysaccharides containing three or more (1-&gt;4)-alpha-linked D-glucose units.. In Streptomyces lividans, this protein is Alpha-amylase (amy).